The sequence spans 1564 residues: Nucleoporin nup184 (1564 aa).

It is found in the nucleus. The protein localises to the nuclear pore complex. In terms of biological role, interacts with pom152 in the core structure of the nuclear pore complex (NPC). Involved in the export of mRNA. This Schizosaccharomyces pombe (strain 972 / ATCC 24843) (Fission yeast) protein is Nucleoporin nup184 (nup184).